We begin with the raw amino-acid sequence, 474 residues long: Aspartyl protease family protein At5g10770 (474 aa).

The first 25 residues, Met1 to Gly25, serve as a signal peptide directing secretion. A Peptidase A1 domain is found at Tyr132–Ala469. Residues Asp150 and Asp352 contribute to the active site. A disulfide bridge links Cys391 with Cys432. Asn443 is lipidated: GPI-anchor amidated asparagine. Residues Ala444–Ser474 constitute a propeptide, removed in mature form.

It belongs to the peptidase A1 family.

The protein localises to the cell membrane. In terms of biological role, probably not redundant with AED1 and not involved in restriction of salicylic acid (SA) or systemic acquired resistance (SAR) signaling. In Arabidopsis thaliana (Mouse-ear cress), this protein is Aspartyl protease family protein At5g10770.